The primary structure comprises 512 residues: V-type proton ATPase subunit B (512 aa).

Arg381 lines the ATP pocket. Positions 484–512 (LYGRDREQDDDEDEDEEDPDKSGDKLIDA) are disordered. Residues 491–502 (QDDDEDEDEEDP) are compositionally biased toward acidic residues. The span at 503–512 (DKSGDKLIDA) shows a compositional bias: basic and acidic residues.

It belongs to the ATPase alpha/beta chains family. As to quaternary structure, V-ATPase is a heteromultimeric enzyme composed of a peripheral catalytic V1 complex (components A to H) attached to an integral membrane V0 proton pore complex (components: a, c, c', c'', d, e, f and VOA1).

The protein localises to the vacuole membrane. In terms of biological role, non-catalytic subunit of the V1 complex of vacuolar(H+)-ATPase (V-ATPase), a multisubunit enzyme composed of a peripheral complex (V1) that hydrolyzes ATP and a membrane integral complex (V0) that translocates protons. Plays an important role in resistance to several stresses, as well as in autophagy and virulence. The polypeptide is V-type proton ATPase subunit B (Candida albicans (strain SC5314 / ATCC MYA-2876) (Yeast)).